A 231-amino-acid chain; its full sequence is Flagellar L-ring protein (231 aa).

Residues 1–18 form the signal peptide; it reads MNRYVSVLALSGIAVLAG. C19 is lipidated: N-palmitoyl cysteine. C19 is lipidated: S-diacylglycerol cysteine.

Belongs to the FlgH family. The basal body constitutes a major portion of the flagellar organelle and consists of four rings (L,P,S, and M) mounted on a central rod.

It localises to the cell outer membrane. It is found in the bacterial flagellum basal body. In terms of biological role, assembles around the rod to form the L-ring and probably protects the motor/basal body from shearing forces during rotation. The protein is Flagellar L-ring protein of Pseudomonas fluorescens (strain SBW25).